The following is a 207-amino-acid chain: Thiamine-phosphate synthase (207 aa).

Residues 41–45 and N73 each bind 4-amino-2-methyl-5-(diphosphooxymethyl)pyrimidine; that span reads QLRLK. The Mg(2+) site is built by D74 and D93. T111 provides a ligand contact to 4-amino-2-methyl-5-(diphosphooxymethyl)pyrimidine. Position 138–140 (138–140) interacts with 2-[(2R,5Z)-2-carboxy-4-methylthiazol-5(2H)-ylidene]ethyl phosphate; that stretch reads TKT. K141 lines the 4-amino-2-methyl-5-(diphosphooxymethyl)pyrimidine pocket. G168 lines the 2-[(2R,5Z)-2-carboxy-4-methylthiazol-5(2H)-ylidene]ethyl phosphate pocket.

Belongs to the thiamine-phosphate synthase family. The cofactor is Mg(2+).

The catalysed reaction is 2-[(2R,5Z)-2-carboxy-4-methylthiazol-5(2H)-ylidene]ethyl phosphate + 4-amino-2-methyl-5-(diphosphooxymethyl)pyrimidine + 2 H(+) = thiamine phosphate + CO2 + diphosphate. It catalyses the reaction 2-(2-carboxy-4-methylthiazol-5-yl)ethyl phosphate + 4-amino-2-methyl-5-(diphosphooxymethyl)pyrimidine + 2 H(+) = thiamine phosphate + CO2 + diphosphate. It carries out the reaction 4-methyl-5-(2-phosphooxyethyl)-thiazole + 4-amino-2-methyl-5-(diphosphooxymethyl)pyrimidine + H(+) = thiamine phosphate + diphosphate. It participates in cofactor biosynthesis; thiamine diphosphate biosynthesis; thiamine phosphate from 4-amino-2-methyl-5-diphosphomethylpyrimidine and 4-methyl-5-(2-phosphoethyl)-thiazole: step 1/1. Condenses 4-methyl-5-(beta-hydroxyethyl)thiazole monophosphate (THZ-P) and 2-methyl-4-amino-5-hydroxymethyl pyrimidine pyrophosphate (HMP-PP) to form thiamine monophosphate (TMP). This is Thiamine-phosphate synthase from Pelagibacter ubique (strain HTCC1062).